We begin with the raw amino-acid sequence, 96 residues long: UPF0235 protein CKO_04329 (96 aa).

It belongs to the UPF0235 family.

This is UPF0235 protein CKO_04329 from Citrobacter koseri (strain ATCC BAA-895 / CDC 4225-83 / SGSC4696).